The primary structure comprises 399 residues: Stage III sporulation protein AE (399 aa).

A signal peptide spans 1 to 24 (MKRFQWVLLLAVLIIAGRAEIVQA). 7 consecutive transmembrane segments (helical) span residues 104 to 124 (VLANGKLLGTLILLTIFCVIL), 140 to 160 (AYSIVYMVLIILALNSFHVAI), 172 to 192 (SFILALIPLLLALLASSGGAV), 209 to 229 (GLLIQNIVMPLIFLSAILSIV), 248 to 268 (IAIGALAVFLTIFLGVISVQG), 315 to 335 (VGILGVAILICIAAFPAIKVL), and 368 to 388 (IYIFAALAIVSLMFFLSLTVI).

As to quaternary structure, interacts with SpoIIIJ and YqjG.

It localises to the cell membrane. Functionally, required during sporulation for activation of sigma factor SpoIIIG/SigG after engulfment is completed in the prespore. Overexpression in the absence of SpoIIIJ is synthetically lethal. The polypeptide is Stage III sporulation protein AE (spoIIIAE) (Bacillus subtilis (strain 168)).